A 78-amino-acid polypeptide reads, in one-letter code: Small ribosomal subunit protein uS15 (78 aa).

This sequence belongs to the universal ribosomal protein uS15 family. Part of the 30S ribosomal subunit. Forms a bridge to the 50S subunit in the 70S ribosome, contacting the 23S rRNA.

Its function is as follows. One of the primary rRNA binding proteins, it binds directly to 16S rRNA where it helps nucleate assembly of the platform of the 30S subunit by binding and bridging several RNA helices of the 16S rRNA. In terms of biological role, forms an intersubunit bridge (bridge B4) with the 23S rRNA of the 50S subunit in the ribosome. This chain is Small ribosomal subunit protein uS15, found in Karelsulcia muelleri (strain GWSS) (Sulcia muelleri).